The sequence spans 326 residues: 3-isopropylmalate dehydrogenase (326 aa).

Residues R81, R91, R112, and D198 each contribute to the substrate site. Mg(2+) contacts are provided by D198, D222, and D226. G255–N267 contributes to the NAD(+) binding site.

This sequence belongs to the isocitrate and isopropylmalate dehydrogenases family. As to quaternary structure, homotetramer. Mg(2+) is required as a cofactor. It depends on Mn(2+) as a cofactor.

It localises to the cytoplasm. The enzyme catalyses (2R,3S)-3-isopropylmalate + NAD(+) = 4-methyl-2-oxopentanoate + CO2 + NADH. It functions in the pathway amino-acid biosynthesis; L-leucine biosynthesis; L-leucine from 3-methyl-2-oxobutanoate: step 3/4. Catalyzes the oxidation of 3-carboxy-2-hydroxy-4-methylpentanoate (3-isopropylmalate) to 3-carboxy-4-methyl-2-oxopentanoate. The product decarboxylates to 4-methyl-2 oxopentanoate. This is 3-isopropylmalate dehydrogenase (leuB) from Archaeoglobus fulgidus (strain ATCC 49558 / DSM 4304 / JCM 9628 / NBRC 100126 / VC-16).